Here is a 414-residue protein sequence, read N- to C-terminus: Gamma-glutamyl phosphate reductase (414 aa).

This sequence belongs to the gamma-glutamyl phosphate reductase family.

It localises to the cytoplasm. It carries out the reaction L-glutamate 5-semialdehyde + phosphate + NADP(+) = L-glutamyl 5-phosphate + NADPH + H(+). Its pathway is amino-acid biosynthesis; L-proline biosynthesis; L-glutamate 5-semialdehyde from L-glutamate: step 2/2. Catalyzes the NADPH-dependent reduction of L-glutamate 5-phosphate into L-glutamate 5-semialdehyde and phosphate. The product spontaneously undergoes cyclization to form 1-pyrroline-5-carboxylate. This Xanthomonas campestris pv. campestris (strain 8004) protein is Gamma-glutamyl phosphate reductase.